The primary structure comprises 386 residues: Tryptophan--tRNA ligase (386 aa).

The short motif at 82–90 (PSGPMHIGH) is the 'HIGH' region element. The short motif at 253–257 (KMSAS) is the 'KMSKS' region element.

Belongs to the class-I aminoacyl-tRNA synthetase family.

It localises to the cytoplasm. The catalysed reaction is tRNA(Trp) + L-tryptophan + ATP = L-tryptophyl-tRNA(Trp) + AMP + diphosphate + H(+). This chain is Tryptophan--tRNA ligase, found in Pyrococcus horikoshii (strain ATCC 700860 / DSM 12428 / JCM 9974 / NBRC 100139 / OT-3).